A 65-amino-acid chain; its full sequence is Muscarinic toxin 3 (65 aa).

Disulfide bonds link cysteine 3–cysteine 24, cysteine 17–cysteine 42, cysteine 46–cysteine 57, and cysteine 58–cysteine 63.

Belongs to the three-finger toxin family. Short-chain subfamily. Aminergic toxin sub-subfamily. Expressed by the venom gland.

The protein resides in the secreted. Its function is as follows. Potent antagonist (IC(50)=1-10 nM) of M4 (CHRM4) muscarinic receptors, and CHRM1, ADRA1A, ADRA2A and ADRA2C adrenergic receptors. Also antagonises ADRA1B and ADRA1D adrenergic receptors with a 10-times lower affinity. The protein is Muscarinic toxin 3 of Dendroaspis angusticeps (Eastern green mamba).